The sequence spans 318 residues: Galactofuranose-binding protein YtfQ (318 aa).

Residues 1-21 (MWKRLLIVSAVSAAMSSMALA) form the signal peptide. Residues 34 to 38 (ESGWR), 111 to 112 (DR), arginine 167, asparagine 220, and aspartate 248 contribute to the beta-D-galactofuranose site. The cysteines at positions 150 and 214 are disulfide-linked.

The protein belongs to the bacterial solute-binding protein 2 family. The complex is composed of two ATP-binding proteins (YtfR), two transmembrane proteins (YtfT and YjfF) and a solute-binding protein (YtfQ).

It is found in the periplasm. Its function is as follows. Part of the ABC transporter complex YtfQRT-YjfF involved in galactofuranose transport. Binds to both alpha- and beta-galactofuranose. The sequence is that of Galactofuranose-binding protein YtfQ (ytfQ) from Escherichia coli (strain K12).